Reading from the N-terminus, the 350-residue chain is Probable L-aspartate decarboxylase (350 aa).

K206 bears the N6-(pyridoxal phosphate)lysine mark.

The protein belongs to the group II decarboxylase family. MfnA subfamily. Requires pyridoxal 5'-phosphate as cofactor.

It carries out the reaction L-aspartate + H(+) = beta-alanine + CO2. It functions in the pathway cofactor biosynthesis; coenzyme A biosynthesis. Functionally, catalyzes the decarboxylation of L-aspartate to produce beta-alanine. The chain is Probable L-aspartate decarboxylase from Haloarcula marismortui (strain ATCC 43049 / DSM 3752 / JCM 8966 / VKM B-1809) (Halobacterium marismortui).